Here is a 289-residue protein sequence, read N- to C-terminus: T-cell ecto-ADP-ribosyltransferase 2 (289 aa).

Positions 1–20 (MTSKIFKFFLTWWLTQQVTG) are cleaved as a signal peptide. Cystine bridges form between Cys41–Cys246 and Cys141–Cys193. The 181-residue stretch at 61–241 (EELKLEWEKA…IFLDSPERKK (181 aa)) folds into the TR mART core domain. Asn79 carries an N-linked (GlcNAc...) asparagine glycan. 3 residues coordinate NAD(+): Tyr98, Arg146, and Gln164. Arg146 is an active-site residue. Ser167 is a catalytic residue. Ser202 provides a ligand contact to NAD(+). Residue Glu209 is part of the active site. Residue Asn249 is glycosylated (N-linked (GlcNAc...) asparagine). A lipid anchor (GPI-anchor amidated serine) is attached at Ser260. The propeptide at 261–289 (ISGSRESCVSLFLVVLLGLLVQQLTLAEL) is removed in mature form.

Belongs to the Arg-specific ADP-ribosyltransferase family. Expressed in spleen, intestine and thymus.

It localises to the cell membrane. It carries out the reaction L-arginyl-[protein] + NAD(+) = N(omega)-(ADP-D-ribosyl)-L-arginyl-[protein] + nicotinamide + H(+). The catalysed reaction is NAD(+) + H2O = ADP-D-ribose + nicotinamide + H(+). In terms of biological role, has both NAD(+) glycohydrolase and ADP-ribosyltransferase activity. This chain is T-cell ecto-ADP-ribosyltransferase 2 (Art2b), found in Mus musculus (Mouse).